A 119-amino-acid chain; its full sequence is Protein TusC (119 aa).

Belongs to the DsrF/TusC family. Heterohexamer, formed by a dimer of trimers. The hexameric TusBCD complex contains 2 copies each of TusB, TusC and TusD. The TusBCD complex interacts with TusE.

The protein resides in the cytoplasm. Part of a sulfur-relay system required for 2-thiolation of 5-methylaminomethyl-2-thiouridine (mnm(5)s(2)U) at tRNA wobble positions. The protein is Protein TusC of Pectobacterium carotovorum subsp. carotovorum (strain PC1).